We begin with the raw amino-acid sequence, 448 residues long: Glutamate--tRNA ligase 1 (448 aa).

A 'HIGH' region motif is present at residues 9–19 (PSPTGKLHIGN). The short motif at 240 to 244 (KISKR) is the 'KMSKS' region element. Lys-243 is an ATP binding site.

The protein belongs to the class-I aminoacyl-tRNA synthetase family. Glutamate--tRNA ligase type 1 subfamily. In terms of assembly, monomer.

Its subcellular location is the cytoplasm. It catalyses the reaction tRNA(Glu) + L-glutamate + ATP = L-glutamyl-tRNA(Glu) + AMP + diphosphate. In terms of biological role, catalyzes the attachment of glutamate to tRNA(Glu) in a two-step reaction: glutamate is first activated by ATP to form Glu-AMP and then transferred to the acceptor end of tRNA(Glu). This chain is Glutamate--tRNA ligase 1, found in Orientia tsutsugamushi (strain Ikeda) (Rickettsia tsutsugamushi).